The chain runs to 338 residues: Putative transport protein TM_1349 (338 aa).

The next 7 helical transmembrane spans lie at 20–40, 68–88, 147–167, 203–223, 239–259, 263–283, and 297–317; these read ILIS…IVLM, ALLL…PPVF, VSVT…VFYI, VIFI…EAFN, FIPI…SLTL, GVLL…VVFI, and IILS…FVGV.

This sequence belongs to the autoinducer-2 exporter (AI-2E) (TC 2.A.86) family.

It is found in the cell membrane. This chain is Putative transport protein TM_1349, found in Thermotoga maritima (strain ATCC 43589 / DSM 3109 / JCM 10099 / NBRC 100826 / MSB8).